The following is a 198-amino-acid chain: Na(+)-translocating NADH-quinone reductase subunit E (198 aa).

A run of 6 helical transmembrane segments spans residues 11–31, 39–59, 77–97, 110–130, 140–160, and 176–196; these read SIFIENMALSFFLGMCTFLAV, FGLGVAVVVVLTIAVPVNNLV, FLNFITFIGVIAALVQILEMI, GIFLPLITVNCAIFGGVSFMV, VVYGFGAGVGWMLAIVALAGI, and LGITFITVGLMALGFMSFSGV.

It belongs to the NqrDE/RnfAE family. As to quaternary structure, composed of six subunits; NqrA, NqrB, NqrC, NqrD, NqrE and NqrF.

The protein localises to the cell inner membrane. It catalyses the reaction a ubiquinone + n Na(+)(in) + NADH + H(+) = a ubiquinol + n Na(+)(out) + NAD(+). Its function is as follows. NQR complex catalyzes the reduction of ubiquinone-1 to ubiquinol by two successive reactions, coupled with the transport of Na(+) ions from the cytoplasm to the periplasm. NqrA to NqrE are probably involved in the second step, the conversion of ubisemiquinone to ubiquinol. The chain is Na(+)-translocating NADH-quinone reductase subunit E from Vibrio vulnificus (strain CMCP6).